The chain runs to 86 residues: UPF0180 protein CA_C1486 (86 aa).

The protein belongs to the UPF0180 family.

The chain is UPF0180 protein CA_C1486 from Clostridium acetobutylicum (strain ATCC 824 / DSM 792 / JCM 1419 / IAM 19013 / LMG 5710 / NBRC 13948 / NRRL B-527 / VKM B-1787 / 2291 / W).